A 239-amino-acid polypeptide reads, in one-letter code: Tungstate uptake system permease protein TupB (239 aa).

The ABC transmembrane type-1 domain occupies 37 to 233 (IKTTLLSSSI…LIAFCLNFIT (197 aa)). 5 consecutive transmembrane segments (helical) span residues 45–65 (SISI…LGFF), 76–96 (IVDT…YALI), 114–134 (LILG…SNLI), 168–188 (ISVV…AMIV), and 212–232 (FASG…LNFI).

The protein belongs to the binding-protein-dependent transport system permease family. In terms of assembly, the complex is composed of two ATP-binding proteins (TupC), two transmembrane proteins (TupB) and a solute-binding protein (TupA).

It localises to the cell inner membrane. Functionally, part of an ABC transporter complex involved in ultra-high affinity tungstate uptake. Probably responsible for the translocation of the substrate across the membrane. The sequence is that of Tungstate uptake system permease protein TupB from Campylobacter jejuni subsp. jejuni serotype O:2 (strain ATCC 700819 / NCTC 11168).